The primary structure comprises 748 residues: E3 ubiquitin-protein ligase SMURF2 (748 aa).

One can recognise a C2 domain in the interval 1–119 (MSNPGGRRNG…TGYQRLDLCK (119 aa)). Residue Lys-119 forms a Glycyl lysine isopeptide (Lys-Gly) (interchain with G-Cter in ubiquitin) linkage. WW domains are found at residues 157–190 (NDLP…RPTR), 251–284 (PDLP…DPRV), and 297–330 (GPLP…DPRL). One can recognise an HECT domain in the interval 414–748 (RPKDLWKRLM…IEETCGFAVE (335 aa)). The active-site Glycyl thioester intermediate is Cys-716.

In terms of assembly, interacts (via WW domains) with SMAD1. Interacts (via WW domains) with SMAD2 (via PY-motif). Interacts (via WW domains) with SMAD3 (via PY-motif). Interacts with SMAD6. Interacts with SMAD7 (via PY-motif) and TGFBR1; SMAD7 recruits SMURF2 to the TGF-beta receptor and regulates its degradation. Does not interact with SMAD4; SMAD4 lacks a PY-motif. Interacts with AIMP1. Interacts with NDFIP1 and NDFIP2; this interaction activates the E3 ubiquitin-protein ligase. Interacts with TTC3. Post-translationally, auto-ubiquitinated and ubiquitinated in the presence of RNF11 and UBE2D1. Ubiquitinated by the SCF(FBXL15) complex and TTC3, leading to its degradation by the proteasome. 'Lys-48'-linked polyubiquitination mediated by TRAF4 at Lys-119 leads to SMURF2 proteasomal degradation.

The protein resides in the nucleus. It is found in the cytoplasm. The protein localises to the cell membrane. It localises to the membrane raft. It carries out the reaction S-ubiquitinyl-[E2 ubiquitin-conjugating enzyme]-L-cysteine + [acceptor protein]-L-lysine = [E2 ubiquitin-conjugating enzyme]-L-cysteine + N(6)-ubiquitinyl-[acceptor protein]-L-lysine.. It functions in the pathway protein modification; protein ubiquitination. With respect to regulation, activated by NDFIP1- and NDFIP2-binding. Functionally, E3 ubiquitin-protein ligase which accepts ubiquitin from an E2 ubiquitin-conjugating enzyme in the form of a thioester and then directly transfers the ubiquitin to targeted substrates. Interacts with SMAD7 to trigger SMAD7-mediated transforming growth factor beta/TGF-beta receptor ubiquitin-dependent degradation, thereby down-regulating TGF-beta signaling. In addition, interaction with SMAD7 activates autocatalytic degradation, which is prevented by interaction with AIMP1. Also forms a stable complex with TGF-beta receptor-mediated phosphorylated SMAD1, SMAD2 and SMAD3, and targets SMAD1 and SMAD2 for ubiquitination and proteasome-mediated degradation. SMAD2 may recruit substrates, such as SNON, for ubiquitin-dependent degradation. Negatively regulates TGFB1-induced epithelial-mesenchymal transition and myofibroblast differentiation. The polypeptide is E3 ubiquitin-protein ligase SMURF2 (Mus musculus (Mouse)).